The chain runs to 719 residues: Plasmin and fibronectin-binding protein A (719 aa).

The signal sequence occupies residues 1–45 (MLKIVKKLEVLMKYFVPNEVFSIRKLKVGTCSVLLAISILGSQGI). Disordered regions lie at residues 56-76 (PMAT…SPTV) and 109-128 (IRSN…TSTN). 5 PbH1 repeats span residues 287–310 (SNNV…QIAG), 362–384 (SENV…LVTA), 397–419 (PSNI…RFTG), 497–523 (VSDI…ELLR), and 525–546 (SDNL…VIED). Residues 601–658 (NNLSDKNEKEKNKEEKQSNSNNVIDSNQKNGEFNSSKDNRQMNDKIDNKQDNKTEEVN) adopt a coiled-coil conformation. Residues 606–617 (KNEKEKNKEEKQ) show a composition bias toward basic and acidic residues. The segment at 606–655 (KNEKEKNKEEKQSNSNNVIDSNQKNGEFNSSKDNRQMNDKIDNKQDNKTE) is disordered. Over residues 623–634 (VIDSNQKNGEFN) the composition is skewed to polar residues. Residues 635–655 (SSKDNRQMNDKIDNKQDNKTE) show a composition bias toward basic and acidic residues. The LPXTG sorting signal motif lies at 685–689 (LPKTG). The residue at position 688 (Thr-688) is a Pentaglycyl murein peptidoglycan amidated threonine. The propeptide at 689–719 (GSNKIMELFLTVTGIGLLLTLKGLKYYGKDK) is removed by sortase.

Its subcellular location is the secreted. It localises to the cell wall. Functionally, acts as a fibronectin-dependent adhesin and invasin. Binds host (in this case human) fibronectin, plasmin, plasminogen, and human serum albumin. Where the bacteria adhere to human cells there is major recruitment of microvilli which seem to fuse to cover the streptococcal chains. Antibodies to this protein reduce bacterial growth in human blood. The polypeptide is Plasmin and fibronectin-binding protein A (pfbA) (Streptococcus pneumoniae (strain ATCC BAA-255 / R6)).